Consider the following 334-residue polypeptide: Nucleoid-associated protein Pfl01_0983 (334 aa).

It belongs to the YejK family.

The protein localises to the cytoplasm. It is found in the nucleoid. The sequence is that of Nucleoid-associated protein Pfl01_0983 from Pseudomonas fluorescens (strain Pf0-1).